Reading from the N-terminus, the 205-residue chain is Holliday junction branch migration complex subunit RuvA (205 aa).

A domain I region spans residues 1–64 (MIGKLTGLVD…EDAIRLFGFP (64 aa)). The interval 65–143 (SEVERDWFRL…ALGPVDSLTA (79 aa)) is domain II. The flexible linker stretch occupies residues 144–153 (KLTIAEAEGT). A domain III region spans residues 153-205 (TAPVAAQDAITALVNLGYGRPQAAAAVATSLEALGETAPLADLIRRGLKELAR).

It belongs to the RuvA family. As to quaternary structure, homotetramer. Forms an RuvA(8)-RuvB(12)-Holliday junction (HJ) complex. HJ DNA is sandwiched between 2 RuvA tetramers; dsDNA enters through RuvA and exits via RuvB. An RuvB hexamer assembles on each DNA strand where it exits the tetramer. Each RuvB hexamer is contacted by two RuvA subunits (via domain III) on 2 adjacent RuvB subunits; this complex drives branch migration. In the full resolvosome a probable DNA-RuvA(4)-RuvB(12)-RuvC(2) complex forms which resolves the HJ.

The protein resides in the cytoplasm. Its function is as follows. The RuvA-RuvB-RuvC complex processes Holliday junction (HJ) DNA during genetic recombination and DNA repair, while the RuvA-RuvB complex plays an important role in the rescue of blocked DNA replication forks via replication fork reversal (RFR). RuvA specifically binds to HJ cruciform DNA, conferring on it an open structure. The RuvB hexamer acts as an ATP-dependent pump, pulling dsDNA into and through the RuvAB complex. HJ branch migration allows RuvC to scan DNA until it finds its consensus sequence, where it cleaves and resolves the cruciform DNA. This chain is Holliday junction branch migration complex subunit RuvA, found in Beijerinckia indica subsp. indica (strain ATCC 9039 / DSM 1715 / NCIMB 8712).